Here is a 431-residue protein sequence, read N- to C-terminus: Enolase (431 aa).

Position 166 (Gln166) interacts with (2R)-2-phosphoglycerate. Glu208 (proton donor) is an active-site residue. Mg(2+) is bound by residues Asp245, Glu288, and Asp315. 4 residues coordinate (2R)-2-phosphoglycerate: Lys340, Arg369, Ser370, and Lys391. Catalysis depends on Lys340, which acts as the Proton acceptor.

It belongs to the enolase family. It depends on Mg(2+) as a cofactor.

The protein resides in the cytoplasm. The protein localises to the secreted. Its subcellular location is the cell surface. It catalyses the reaction (2R)-2-phosphoglycerate = phosphoenolpyruvate + H2O. Its pathway is carbohydrate degradation; glycolysis; pyruvate from D-glyceraldehyde 3-phosphate: step 4/5. Its function is as follows. Catalyzes the reversible conversion of 2-phosphoglycerate (2-PG) into phosphoenolpyruvate (PEP). It is essential for the degradation of carbohydrates via glycolysis. The chain is Enolase from Clostridium botulinum (strain ATCC 19397 / Type A).